Here is a 463-residue protein sequence, read N- to C-terminus: MKHKVKHIHFVGVGGSGMSGIAEVLAHLDFTVTGSDLAASATTRRLEGEGVKVTVGHAAENIAGADAVVISTAVKADNPEVIAARERKIPVVPRAQMLAELMRLKSGIAIAGTHGKTTTTSLVTSILAEGGIDPTFVIGGRLNAAGANARLGSGDFLVAEADESDASFLFLSPVISVVTNIDADHMETYGHDFERLKSAFVDFLNRLPFYGVAVVCGDDANIRDILPRVPKQIITYGLSNECNFHAENIVADNGQMRFDCVRVNGTTSRLSITLNTPGMHNVLNALAAIAVATEVQVSDAAIVKALAEFKGVGRRFQRYGEVALPAGGSFTLVDDYGHHPVEMAATLAAARGAFPGRRLVLAFQPHRYTRTRDCFEDFVKVLSTVDALCLAEIYAAGEAPIVAADGRSLARALRVSGKVEPVFVEDIAAMPQTIMDVARDGDVVLCMGAGSIGAVPGKVAEFK.

Residue 112–118 (GTHGKTT) coordinates ATP.

This sequence belongs to the MurCDEF family.

Its subcellular location is the cytoplasm. It catalyses the reaction UDP-N-acetyl-alpha-D-muramate + L-alanine + ATP = UDP-N-acetyl-alpha-D-muramoyl-L-alanine + ADP + phosphate + H(+). It functions in the pathway cell wall biogenesis; peptidoglycan biosynthesis. Functionally, cell wall formation. In Dechloromonas aromatica (strain RCB), this protein is UDP-N-acetylmuramate--L-alanine ligase.